Here is a 760-residue protein sequence, read N- to C-terminus: Colleterpenol synthase (760 aa).

The tract at residues 14-335 (ASSGLRSKFR…YTRRYPSKAD (322 aa)) is terpene cyclase. Position 95 (D95) interacts with Mg(2+). A DDXXD 1 motif is present at residues 95–99 (DDYYD). Positions 233-241 (NDLYSWPKE) match the NSE/DTE motif. The segment at 336–759 (LRQPEVEFVD…LELVLRRLWI (424 aa)) is prenyltransferase. The interval 359–400 (EEKVVSESVESLPTTEVEDEFSSSDASPGSVDQAISTPPSTT) is disordered. Polar residues predominate over residues 391-400 (QAISTPPSTT). Isopentenyl diphosphate is bound by residues K477, R480, and H509. Residues D516 and D520 each contribute to the Mg(2+) site. The DDXXD 2 motif lies at 516–520 (DDIED). Dimethylallyl diphosphate is bound at residue R525. R526 lines the isopentenyl diphosphate pocket. Residues K605, T606, Q643, N650, K660, and K670 each coordinate dimethylallyl diphosphate.

The protein in the N-terminal section; belongs to the terpene synthase family. This sequence in the C-terminal section; belongs to the FPP/GGPP synthase family. In terms of assembly, hexamer. The cofactor is Mg(2+).

The enzyme catalyses 5 isopentenyl diphosphate + dimethylallyl diphosphate = all-trans-hexaprenyl diphosphate + 5 diphosphate. It catalyses the reaction all-trans-hexaprenyl diphosphate + H2O = colleterpenol + diphosphate. Functionally, bifunctional terpene synthase that converts dimethylallyl diphosphate (DMAPP) and isopentenyl diphosphate (IPP) into colleterpenol as a single product. The C-terminal prenyltransferase (PT) domain of CgCS catalyzes formation of hexaprenyl diphosphate (HexPP), whereas the N-terminal terpene cyclase (TC) domain catalyzes the cyclization of HexPP to colleterpenol. This is Colleterpenol synthase from Colletotrichum gloeosporioides (Anthracnose fungus).